We begin with the raw amino-acid sequence, 712 residues long: Polyribonucleotide nucleotidyltransferase (712 aa).

D487 and D493 together coordinate Mg(2+). The region spanning 554–613 (PKIITMTINPDKIRDVIGPSGKQINKIIEETGVKIDIEQDGTVFISSINQEMNDKAKKII) is the KH domain. In terms of domain architecture, S1 motif spans 623 to 691 (GEIYEGKVKR…KQGRVNLSRK (69 aa)).

This sequence belongs to the polyribonucleotide nucleotidyltransferase family. Mg(2+) serves as cofactor.

The protein localises to the cytoplasm. The catalysed reaction is RNA(n+1) + phosphate = RNA(n) + a ribonucleoside 5'-diphosphate. Involved in mRNA degradation. Catalyzes the phosphorolysis of single-stranded polyribonucleotides processively in the 3'- to 5'-direction. This is Polyribonucleotide nucleotidyltransferase from Bacillus cereus (strain AH187).